We begin with the raw amino-acid sequence, 332 residues long: Ribosomal RNA small subunit methyltransferase H (332 aa).

S-adenosyl-L-methionine-binding positions include 39 to 41, aspartate 56, phenylalanine 83, aspartate 100, and glutamine 107; that span reads GGY.

The protein belongs to the methyltransferase superfamily. RsmH family.

It is found in the cytoplasm. The enzyme catalyses cytidine(1402) in 16S rRNA + S-adenosyl-L-methionine = N(4)-methylcytidine(1402) in 16S rRNA + S-adenosyl-L-homocysteine + H(+). Specifically methylates the N4 position of cytidine in position 1402 (C1402) of 16S rRNA. The protein is Ribosomal RNA small subunit methyltransferase H of Bartonella tribocorum (strain CIP 105476 / IBS 506).